A 137-amino-acid chain; its full sequence is Large ribosomal subunit protein uL16 (137 aa).

This sequence belongs to the universal ribosomal protein uL16 family. As to quaternary structure, part of the 50S ribosomal subunit.

Its function is as follows. Binds 23S rRNA and is also seen to make contacts with the A and possibly P site tRNAs. This Marinomonas sp. (strain MWYL1) protein is Large ribosomal subunit protein uL16.